The following is a 66-amino-acid chain: Large ribosomal subunit protein bL33c (66 aa).

Belongs to the bacterial ribosomal protein bL33 family.

It is found in the plastid. It localises to the chloroplast. The sequence is that of Large ribosomal subunit protein bL33c from Adiantum capillus-veneris (Maidenhair fern).